The chain runs to 470 residues: Protein escargot (470 aa).

The tract at residues 271–309 is disordered; sequence LNLNTSQPGEQAAAKTGDMSPETMPNASAKKDKNQPPRY. 4 C2H2-type zinc fingers span residues 309–331, 344–366, 370–392, and 398–420; these read YQCP…QQFH, FSCK…IRTH, CKCN…IRTH, and FSCQ…LQTH. The C2H2-type 5; atypical zinc finger occupies 426–449; that stretch reads YSCTSCSKTFSRMSLLTKHSEGGC. The interval 448–470 is disordered; it reads GCPGGSAGSSSSSELNYAGYAEP.

It belongs to the snail C2H2-type zinc-finger protein family. As to expression, expression is complex and dynamic. In early embryogenesis, expression begins on the dorsal side of the embryo. Expressed in a pattern of longitudinal stripes early in germband elongation. Later in embryogenesis, expression is in cells that correspond to the wing, haltere, leg and genital imaginal disks and the abdominal histoblasts. In the embryonic leg disk, expression is restricted to imaginal cells. Also expressed in the central nervous system (CNS), tracheae and head of stage 14 embryos. CNS and tracheal expression decays during later stages, though head expression persists until late in embryogenesis. In third instar larvae, expression is seen in the brain and in regions of many imaginal tissues including the eye-antennal, wing, leg and haltere disks. Expressed in embryonic, larval and adult male germline stem cells and in the somatic cells of the embryonic gonads.

Its subcellular location is the nucleus. In terms of biological role, transcription factor that can both stimulate and repress transcription. Binds to the consensus DNA sequence 5'-A/GCAGGTG-3'. Regulates cell motility and adhesion during tracheal morphogenesis by stimulating transcription of the DE-cadherin gene shg at branch tips, thereby promoting tracheal tube fusion. Maintains diploidy in imaginal cells by inhibiting the transcription of genes required for endoreplication. Required for development of the genital disk and acts as an intrinsic determinant of wing cell fate. The somatic protein is required for maintenance of male germ cells. Acts with other members of the snail protein family to control embryonic central nervous system development. This Drosophila melanogaster (Fruit fly) protein is Protein escargot (esg).